Reading from the N-terminus, the 78-residue chain is Large ribosomal subunit protein bL28 (78 aa).

Residues 1 to 26 (MARVCQVTGKRPMSGHNVSHANNKTK) form a disordered region.

This sequence belongs to the bacterial ribosomal protein bL28 family.

The sequence is that of Large ribosomal subunit protein bL28 from Nitrosomonas europaea (strain ATCC 19718 / CIP 103999 / KCTC 2705 / NBRC 14298).